Reading from the N-terminus, the 297-residue chain is Bifunctional protein FolD (297 aa).

Residues 167 to 169 (GRS), serine 192, and isoleucine 233 each bind NADP(+).

The protein belongs to the tetrahydrofolate dehydrogenase/cyclohydrolase family. In terms of assembly, homodimer.

The catalysed reaction is (6R)-5,10-methylene-5,6,7,8-tetrahydrofolate + NADP(+) = (6R)-5,10-methenyltetrahydrofolate + NADPH. It carries out the reaction (6R)-5,10-methenyltetrahydrofolate + H2O = (6R)-10-formyltetrahydrofolate + H(+). The protein operates within one-carbon metabolism; tetrahydrofolate interconversion. Its function is as follows. Catalyzes the oxidation of 5,10-methylenetetrahydrofolate to 5,10-methenyltetrahydrofolate and then the hydrolysis of 5,10-methenyltetrahydrofolate to 10-formyltetrahydrofolate. In Caulobacter vibrioides (strain ATCC 19089 / CIP 103742 / CB 15) (Caulobacter crescentus), this protein is Bifunctional protein FolD.